Consider the following 49-residue polypeptide: Osteocalcin (49 aa).

The Gla domain maps to 1–47 (YLDHGLGAPAPYPDPLEPKREVCELNPDCDELADHIGFQEAYRRFYG). Position 9 is a hydroxyproline (P9). Ca(2+)-binding residues include E17, E21, E24, and D30. A 4-carboxyglutamate mark is found at E17, E21, and E24. C23 and C29 are joined by a disulfide.

Belongs to the osteocalcin/matrix Gla protein family. Gamma-carboxyglutamic acid residues are formed by vitamin K dependent carboxylation. These residues are essential for the binding of calcium.

The protein resides in the secreted. In terms of biological role, the carboxylated form is one of the main organic components of the bone matrix, which constitutes 1-2% of the total bone protein: it acts as a negative regulator of bone formation and is required to limit bone formation without impairing bone resorption or mineralization. The carboxylated form binds strongly to apatite and calcium. Its function is as follows. The uncarboxylated form acts as a hormone secreted by osteoblasts, which regulates different cellular processes, such as energy metabolism, male fertility and brain development. Regulates of energy metabolism by acting as a hormone favoring pancreatic beta-cell proliferation, insulin secretion and sensitivity and energy expenditure. Uncarboxylated osteocalcin hormone also promotes testosterone production in the testes: acts as a ligand for G protein-coupled receptor GPRC6A at the surface of Leydig cells, initiating a signaling response that promotes the expression of enzymes required for testosterone synthesis in a CREB-dependent manner. Also acts as a regulator of brain development: osteocalcin hormone crosses the blood-brain barrier and acts as a ligand for GPR158 on neurons, initiating a signaling response that prevents neuronal apoptosis in the hippocampus, favors the synthesis of all monoamine neurotransmitters and inhibits that of gamma-aminobutyric acid (GABA). Osteocalcin also crosses the placenta during pregnancy and maternal osteocalcin is required for fetal brain development. The protein is Osteocalcin (BGLAP) of Bison priscus (Steppe wisent).